The primary structure comprises 83 residues: Small ribosomal subunit protein bS16 (83 aa).

The protein belongs to the bacterial ribosomal protein bS16 family.

The protein is Small ribosomal subunit protein bS16 of Finegoldia magna (strain ATCC 29328 / DSM 20472 / WAL 2508) (Peptostreptococcus magnus).